Reading from the N-terminus, the 237-residue chain is 7-cyano-7-deazaguanine synthase (237 aa).

14–24 (FSGGQDSATCL) contributes to the ATP binding site. Zn(2+)-binding residues include C202, C217, C220, and C223.

Belongs to the QueC family. The cofactor is Zn(2+).

The catalysed reaction is 7-carboxy-7-deazaguanine + NH4(+) + ATP = 7-cyano-7-deazaguanine + ADP + phosphate + H2O + H(+). It participates in purine metabolism; 7-cyano-7-deazaguanine biosynthesis. Catalyzes the ATP-dependent conversion of 7-carboxy-7-deazaguanine (CDG) to 7-cyano-7-deazaguanine (preQ(0)). In Rhodopseudomonas palustris (strain TIE-1), this protein is 7-cyano-7-deazaguanine synthase.